The primary structure comprises 87 residues: Mitochondrial import protein 2 (87 aa).

Residues 1–53 (MADSEDTSVILQGIDTINSVEGLEEDGYLSDEDTSLSNELADAQRQWEESLQQ) are Cytoplasmic-facing. The helical transmembrane segment at 54–71 (LNKLLNWVLLPLLGKYIG) threads the bilayer. The Mitochondrial intermembrane portion of the chain corresponds to 72 to 87 (RRMAKTLWSRFIEHFV).

This sequence belongs to the MIM2 family. In terms of assembly, component of the MIM complex containing at least MIM1 and MIM2. Interacts with MIM1; interaction is direct.

The protein localises to the mitochondrion outer membrane. In terms of biological role, component of the MIM complex required for outer membrane protein import. Involved in import of the subset of proteins with multiple alpha-helical transmembrane segments, including UGO1, TOM20 and FZO1. The polypeptide is Mitochondrial import protein 2 (Saccharomyces cerevisiae (strain ATCC 204508 / S288c) (Baker's yeast)).